The sequence spans 297 residues: uncharacterized protein (297 aa).

Belongs to the metallo-dependent hydrolases superfamily.

This is an uncharacterized protein from Sinorhizobium fredii (strain NBRC 101917 / NGR234).